The following is a 1695-amino-acid chain: Helicase swr1 (1695 aa).

Over residues 1–10 (MQDGSLNGLS) the composition is skewed to polar residues. A disordered region spans residues 1–229 (MQDGSLNGLS…SHSNVTSTPT (229 aa)). Over residues 11 to 25 (HHNDERVNHENEDKS) the composition is skewed to basic and acidic residues. Polar residues-rich tracts occupy residues 126–137 (AQRSTVNKNLSG) and 145–156 (SPLSMSVSQSGI). Low complexity predominate over residues 187–207 (RSPPRQTPSRTRSQSSATSAP). The HSA domain occupies 334-408 (PEQQEEPPQQ…EEVRVKRKQL (75 aa)). Disordered stretches follow at residues 467-738 (SDFL…ASAP) and 772-821 (LRQN…LKTP). Residues 499–514 (SETEDEDEVDDDEGLT) show a composition bias toward acidic residues. Positions 538–554 (ASDTSESSDGTRTSHIL) are enriched in polar residues. The segment covering 572 to 616 (IELDEVDPMLLDDSEDESTDMDDDMGDSDEDGDADGTDSDDESDD) has biased composition (acidic residues). The segment covering 626 to 638 (SKDRVLNDAHRFD) has biased composition (basic and acidic residues). Residues 656 to 678 (FDDDGQSVSVDEDGDEELEDADE) are compositionally biased toward acidic residues. Polar residues predominate over residues 685-697 (GPSNSVSISQSTA). The segment covering 705–718 (TPDEEPDEQAEVVD) has biased composition (acidic residues). In terms of domain architecture, Helicase ATP-binding spans 842 to 1007 (AGLYNNHING…WSLLFFLMPS (166 aa)). 855–862 (DEMGLGKT) serves as a coordination point for ATP. The DEAH box motif lies at 958–961 (DEAH). A Helicase C-terminal domain is found at 1382–1532 (RLDKLLRDLK…DVVIQEGEFT (151 aa)). Disordered stretches follow at residues 1590-1625 (AQKEMEQADNDDFGDRSISHTPGQVGTPLATGPQEG) and 1669-1695 (EPLVLPPDKTKKKSKKGKEHRLSKRRR). Positions 1678–1695 (TKKKSKKGKEHRLSKRRR) are enriched in basic residues.

It belongs to the SNF2/RAD54 helicase family. SWR1 subfamily. Component of the SWR1 chromatin-remodeling complex.

It is found in the nucleus. It catalyses the reaction ATP + H2O = ADP + phosphate + H(+). Catalytic component of the SWR1 complex which mediates the ATP-dependent exchange of histone H2A for the H2A variant HZT1 leading to transcriptional regulation of selected genes by chromatin remodeling. The chain is Helicase swr1 (swr1) from Aspergillus fumigatus (strain ATCC MYA-4609 / CBS 101355 / FGSC A1100 / Af293) (Neosartorya fumigata).